We begin with the raw amino-acid sequence, 146 residues long: Oleosin (146 aa).

A2 carries the N-acetylalanine modification. A run of 3 helical transmembrane segments spans residues 22–42 (ILGF…TGLT), 56–76 (VLIF…VAVA), and 77–97 (GFLS…WLYN). Residues 55-66 (PVLIFFSPILIP) carry the Proline-knot motif.

This sequence belongs to the oleosin family. As to expression, expressed in pollen (at protein level).

The protein localises to the lipid droplet. It is found in the membrane. This Pinus elliottii (Slash pine) protein is Oleosin.